Here is a 125-residue protein sequence, read N- to C-terminus: Small ribosomal subunit protein uS12 (125 aa).

A 3-methylthioaspartic acid modification is found at Asp89. Residues 106–125 (GVKDRKQSRSKYGAKRPKKA) form a disordered region. Residues 113–125 (SRSKYGAKRPKKA) show a composition bias toward basic residues.

It belongs to the universal ribosomal protein uS12 family. Part of the 30S ribosomal subunit. Contacts proteins S8 and S17. May interact with IF1 in the 30S initiation complex.

Functionally, with S4 and S5 plays an important role in translational accuracy. In terms of biological role, interacts with and stabilizes bases of the 16S rRNA that are involved in tRNA selection in the A site and with the mRNA backbone. Located at the interface of the 30S and 50S subunits, it traverses the body of the 30S subunit contacting proteins on the other side and probably holding the rRNA structure together. The combined cluster of proteins S8, S12 and S17 appears to hold together the shoulder and platform of the 30S subunit. The sequence is that of Small ribosomal subunit protein uS12 from Variovorax paradoxus (strain S110).